Reading from the N-terminus, the 267-residue chain is Orotidine 5'-phosphate decarboxylase (267 aa).

Substrate-binding positions include D40, 62 to 64 (KTH), 93 to 102 (DRKFADIGNT), Y215, and R234. Catalysis depends on K95, which acts as the Proton donor.

It belongs to the OMP decarboxylase family.

The enzyme catalyses orotidine 5'-phosphate + H(+) = UMP + CO2. The protein operates within pyrimidine metabolism; UMP biosynthesis via de novo pathway; UMP from orotate: step 2/2. This Phycomyces blakesleeanus (strain ATCC 8743b / DSM 1359 / FGSC 10004 / NBRC 33097 / NRRL 1555) protein is Orotidine 5'-phosphate decarboxylase (pyrG).